We begin with the raw amino-acid sequence, 276 residues long: Diaminopimelate epimerase (276 aa).

Substrate-binding residues include asparagine 13, glutamine 46, and asparagine 66. Cysteine 75 functions as the Proton donor in the catalytic mechanism. Substrate is bound by residues 76–77 (GN), asparagine 159, asparagine 192, and 210–211 (ER). Cysteine 219 serves as the catalytic Proton acceptor. 220-221 (GT) contributes to the substrate binding site.

This sequence belongs to the diaminopimelate epimerase family. Homodimer.

The protein resides in the cytoplasm. It carries out the reaction (2S,6S)-2,6-diaminopimelate = meso-2,6-diaminopimelate. Its pathway is amino-acid biosynthesis; L-lysine biosynthesis via DAP pathway; DL-2,6-diaminopimelate from LL-2,6-diaminopimelate: step 1/1. Functionally, catalyzes the stereoinversion of LL-2,6-diaminopimelate (L,L-DAP) to meso-diaminopimelate (meso-DAP), a precursor of L-lysine and an essential component of the bacterial peptidoglycan. In Pseudomonas savastanoi pv. phaseolicola (strain 1448A / Race 6) (Pseudomonas syringae pv. phaseolicola (strain 1448A / Race 6)), this protein is Diaminopimelate epimerase.